A 1404-amino-acid polypeptide reads, in one-letter code: DNA-directed RNA polymerase subunit beta' (1404 aa).

The Zn(2+) site is built by C70, C72, C85, and C88. Mg(2+) is bound by residues D460, D462, and D464. Zn(2+) contacts are provided by C814, C888, C895, and C898.

Belongs to the RNA polymerase beta' chain family. As to quaternary structure, the RNAP catalytic core consists of 2 alpha, 1 beta, 1 beta' and 1 omega subunit. When a sigma factor is associated with the core the holoenzyme is formed, which can initiate transcription. It depends on Mg(2+) as a cofactor. Zn(2+) serves as cofactor.

It catalyses the reaction RNA(n) + a ribonucleoside 5'-triphosphate = RNA(n+1) + diphosphate. Its function is as follows. DNA-dependent RNA polymerase catalyzes the transcription of DNA into RNA using the four ribonucleoside triphosphates as substrates. This chain is DNA-directed RNA polymerase subunit beta', found in Shewanella piezotolerans (strain WP3 / JCM 13877).